The primary structure comprises 584 residues: Pentatricopeptide repeat-containing protein At2g01510, mitochondrial (584 aa).

The transit peptide at 1 to 20 directs the protein to the mitochondrion; it reads MLAKQTPLTKQMLSELLRAS. PPR repeat units lie at residues 73 to 107, 108 to 142, 143 to 173, 174 to 208, 209 to 243, 244 to 274, 275 to 309, 310 to 344, and 348 to 378; these read RIFL…GVRP, DEFT…GFGC, LGIV…MQVK, DLVA…AVQF, DSFT…EIDC, NIIV…MKQR, NVVS…GLRP, NYVT…NDKN, and RKEH…MPVE. The interval 383–458 is type E motif; the sequence is IWGALLGACA…VAAYSSVEFE (76 aa). Positions 459-489 are type E(+) motif; it reads GKIHFFNRGDKSHPQSKAIYEKLDEILKKIR. Positions 490–584 are type DYW motif; the sequence is KMGYVPDTCS…NGVCSCKEFW (95 aa).

It belongs to the PPR family. PCMP-H subfamily.

It is found in the mitochondrion. In Arabidopsis thaliana (Mouse-ear cress), this protein is Pentatricopeptide repeat-containing protein At2g01510, mitochondrial (PCMP-H37).